The primary structure comprises 139 residues: Nucleoside diphosphate kinase (139 aa).

The ATP site is built by Lys-10, Phe-58, Arg-86, Thr-92, Arg-104, and Asn-114. Residue His-117 is the Pros-phosphohistidine intermediate of the active site.

It belongs to the NDK family. In terms of assembly, homotetramer. It depends on Mg(2+) as a cofactor.

The protein localises to the cytoplasm. The catalysed reaction is a 2'-deoxyribonucleoside 5'-diphosphate + ATP = a 2'-deoxyribonucleoside 5'-triphosphate + ADP. It catalyses the reaction a ribonucleoside 5'-diphosphate + ATP = a ribonucleoside 5'-triphosphate + ADP. Functionally, major role in the synthesis of nucleoside triphosphates other than ATP. The ATP gamma phosphate is transferred to the NDP beta phosphate via a ping-pong mechanism, using a phosphorylated active-site intermediate. In Rhodococcus erythropolis (strain PR4 / NBRC 100887), this protein is Nucleoside diphosphate kinase.